A 501-amino-acid chain; its full sequence is Glucose-6-phosphate exchanger SLC37A2 (501 aa).

Residues 19-39 (SWFRGFILLLTFLIYACYHMS) form a helical membrane-spanning segment. N-linked (GlcNAc...) asparagine glycosylation is found at asparagine 53, asparagine 62, and asparagine 68. The next 5 membrane-spanning stretches (helical) occupy residues 88–108 (GAVD…SGIF), 118–140 (LSAG…FWNI), 142–164 (MLWY…WPSV), 179–199 (FIMG…SLIA), and 210–230 (SFIV…LFLI). Positions 240 to 252 (PPRHHDDPEKEQD) are enriched in basic and acidic residues. The disordered stretch occupies residues 240–266 (PPRHHDDPEKEQDNPEDPVNSPYSSRE). 6 consecutive transmembrane segments (helical) span residues 303 to 323 (CLLF…LYIF), 334 to 354 (GDLS…AGLI), 362 to 382 (ATTC…YNYI), 391 to 411 (IVML…ITTA), 434 to 454 (AIID…AGLI), and 462 to 482 (VFYM…RLVY).

This sequence belongs to the major facilitator superfamily. Organophosphate:Pi antiporter (OPA) (TC 2.A.1.4) family. In terms of tissue distribution, highly expressed in bone marrow derived macrophages, and weakly in spleen.

Its subcellular location is the endoplasmic reticulum membrane. The catalysed reaction is D-glucose 6-phosphate(in) + phosphate(out) = D-glucose 6-phosphate(out) + phosphate(in). Inhibited by vanadate but not by chlorogenic acid. In terms of biological role, inorganic phosphate and glucose-6-phosphate antiporter. May transport cytoplasmic glucose-6-phosphate into the lumen of the endoplasmic reticulum and translocate inorganic phosphate into the opposite direction. Independent of a lumenal glucose-6-phosphatase. May not play a role in homeostatic regulation of blood glucose levels. This chain is Glucose-6-phosphate exchanger SLC37A2, found in Mus musculus (Mouse).